We begin with the raw amino-acid sequence, 183 residues long: Histone deacetylase complex subunit SAP30L (183 aa).

An N-acetylmethionine modification is found at Met1. Residues 1–10 are compositionally biased toward acidic residues; the sequence is MNGFSTEEDS. The segment at 1–23 is disordered; that stretch reads MNGFSTEEDSREGPPAAPAAAAP. 2 disulfides stabilise this stretch: Cys29–Cys30 and Cys38–Cys74. The segment at 29–77 adopts an Atypical zinc-finger fold; it reads CCLIEDGERCVRPAGNASFSKRVQKSISQKKLKLDIDKSVRHLYICDFH. A Glycyl lysine isopeptide (Lys-Gly) (interchain with G-Cter in SUMO2) cross-link involves residue Lys49. The segment at 85 to 105 is disordered; sequence RNKRKRKTSDDGGDSPEHDTD. A Nuclear localization signal (NLS) motif is present at residues 86-91; it reads NKRKRK. Positions 88-90 are important for DNA and phosphoinositide binding; it reads RKR. Thr92 is subject to Phosphothreonine. A phosphoserine mark is found at Ser93 and Ser99. Position 104 is a phosphothreonine (Thr104). Residues Lys155, Lys166, and Lys175 each participate in a glycyl lysine isopeptide (Lys-Gly) (interchain with G-Cter in SUMO2) cross-link.

This sequence belongs to the SAP30 family. As to quaternary structure, interacts with components of the histone deacetylase complex SIN3A, HDAC1 and HDAC2. Binds histones and nucleosomes. Interacts with FEZ1. In terms of tissue distribution, detected in brain and ovary, and at lower levels in heart, small intestine, lung, kidney, skeletal muscle, stomach and spleen (at protein level). Ubiquitous; expressed in all tissues tested with highest levels in testis.

It is found in the nucleus. The protein localises to the nucleolus. Functions as a transcription repressor, probably via its interaction with histone deacetylase complexes. Involved in the functional recruitment of the class 1 Sin3-histone deacetylase complex (HDAC) to the nucleolus. Binds DNA, apparently without sequence-specificity, and bends bound double-stranded DNA. Binds phosphoinositol phosphates (phosphoinositol 3-phosphate, phosphoinositol 4-phosphate and phosphoinositol 5-phosphate) via the same basic sequence motif that mediates DNA binding and nuclear import. In terms of biological role, functions as a transcription repressor; isoform 2 has lower transcription repressor activity than isoform 1 and isoform 3. Its function is as follows. Functions as a transcription repressor; its activity is marginally lower than that of isoform 1. The protein is Histone deacetylase complex subunit SAP30L (SAP30L) of Homo sapiens (Human).